Consider the following 304-residue polypeptide: Acetyl-coenzyme A carboxylase carboxyl transferase subunit beta (304 aa).

Residues V23–V292 form the CoA carboxyltransferase N-terminal domain. The Zn(2+) site is built by C27, C30, C46, and C49. Residues C27–C49 form a C4-type zinc finger. Residues N284–A304 are disordered. The segment covering P295–A304 has biased composition (pro residues).

This sequence belongs to the AccD/PCCB family. In terms of assembly, acetyl-CoA carboxylase is a heterohexamer composed of biotin carboxyl carrier protein (AccB), biotin carboxylase (AccC) and two subunits each of ACCase subunit alpha (AccA) and ACCase subunit beta (AccD). Zn(2+) is required as a cofactor.

It localises to the cytoplasm. It carries out the reaction N(6)-carboxybiotinyl-L-lysyl-[protein] + acetyl-CoA = N(6)-biotinyl-L-lysyl-[protein] + malonyl-CoA. Its pathway is lipid metabolism; malonyl-CoA biosynthesis; malonyl-CoA from acetyl-CoA: step 1/1. In terms of biological role, component of the acetyl coenzyme A carboxylase (ACC) complex. Biotin carboxylase (BC) catalyzes the carboxylation of biotin on its carrier protein (BCCP) and then the CO(2) group is transferred by the transcarboxylase to acetyl-CoA to form malonyl-CoA. In Shigella flexneri, this protein is Acetyl-coenzyme A carboxylase carboxyl transferase subunit beta.